The primary structure comprises 83 residues: Delta-conotoxin-like Ac6.1 (83 aa).

Positions 1 to 22 (MKLTCVVIVAVLFLTAWTFVMA) are cleaved as a signal peptide. Residues 23–51 (DDSRYGLKDLFPKARHEMKNPEASKLNKR) constitute a propeptide that is removed on maturation. Cystine bridges form between cysteine 54–cysteine 69, cysteine 61–cysteine 73, and cysteine 68–cysteine 78. Residues proline 57 and proline 65 each carry the 4-hydroxyproline modification.

This sequence belongs to the conotoxin O1 superfamily. As to expression, expressed by the venom duct.

The protein resides in the secreted. Functionally, delta-conotoxins bind to site 6 of voltage-gated sodium channels (Nav) and inhibit the inactivation process. This chain is Delta-conotoxin-like Ac6.1, found in Conus achatinus (Little frog cone).